The sequence spans 33 residues: Lysozyme C, spleen isozyme (33 aa).

The protein belongs to the glycosyl hydrolase 22 family. As to quaternary structure, monomer.

It carries out the reaction Hydrolysis of (1-&gt;4)-beta-linkages between N-acetylmuramic acid and N-acetyl-D-glucosamine residues in a peptidoglycan and between N-acetyl-D-glucosamine residues in chitodextrins.. In terms of biological role, lysozymes have primarily a bacteriolytic function; those in tissues and body fluids are associated with the monocyte-macrophage system and enhance the activity of immunoagents. The protein is Lysozyme C, spleen isozyme of Equus caballus (Horse).